Consider the following 345-residue polypeptide: Tetraacyldisaccharide 4'-kinase (345 aa).

Position 61-68 (61-68) interacts with ATP; it reads TAGGTGKT.

It belongs to the LpxK family.

It carries out the reaction a lipid A disaccharide + ATP = a lipid IVA + ADP + H(+). Its pathway is glycolipid biosynthesis; lipid IV(A) biosynthesis; lipid IV(A) from (3R)-3-hydroxytetradecanoyl-[acyl-carrier-protein] and UDP-N-acetyl-alpha-D-glucosamine: step 6/6. Functionally, transfers the gamma-phosphate of ATP to the 4'-position of a tetraacyldisaccharide 1-phosphate intermediate (termed DS-1-P) to form tetraacyldisaccharide 1,4'-bis-phosphate (lipid IVA). This Xanthomonas axonopodis pv. citri (strain 306) protein is Tetraacyldisaccharide 4'-kinase.